The following is a 376-amino-acid chain: MSCPVIELAQQLISRPSVSPDDQGCQQLIIERLTPLGFTIEKMPFGQTENLWACRGGEGETLAFAGHTDVVPPGANALWDNPPFEPSIRDGMLYGRGAADMKGSLAAMVVAAERFVHAYPQHRGRLAFLITSDEEADAHDGTVKVVESLISRGERLDYCLVGEPSSQHQLGDMIKNGRRGSITANVTIYGTQGHVAYPHLAQNPIHMASPFIHELVNTVWDNGNEYFPATTMQIANIHSGTGSNNVIPGELFIQFNFRFSTAITDEEIRQRTEALLQKYQLRYHISWSLSGQPFITGEGKLLDAVRYSVKHYTNIEPTLSTSGGTSDGRFIAQMGAQVVELGPINATIHKVNECVSAADLQQLSRIYQRIMEQIIL.

Residue H67 participates in Zn(2+) binding. Residue D69 is part of the active site. Residue D100 coordinates Zn(2+). E134 acts as the Proton acceptor in catalysis. Zn(2+) is bound by residues E135, E163, and H349.

This sequence belongs to the peptidase M20A family. DapE subfamily. As to quaternary structure, homodimer. Zn(2+) serves as cofactor. The cofactor is Co(2+).

It carries out the reaction N-succinyl-(2S,6S)-2,6-diaminopimelate + H2O = (2S,6S)-2,6-diaminopimelate + succinate. It participates in amino-acid biosynthesis; L-lysine biosynthesis via DAP pathway; LL-2,6-diaminopimelate from (S)-tetrahydrodipicolinate (succinylase route): step 3/3. Catalyzes the hydrolysis of N-succinyl-L,L-diaminopimelic acid (SDAP), forming succinate and LL-2,6-diaminopimelate (DAP), an intermediate involved in the bacterial biosynthesis of lysine and meso-diaminopimelic acid, an essential component of bacterial cell walls. The sequence is that of Succinyl-diaminopimelate desuccinylase from Proteus mirabilis (strain HI4320).